Consider the following 356-residue polypeptide: uncharacterized protein (356 aa).

The first 21 residues, 1-21 (MHWSRFVGIFLVFSVFSLVNC), serve as a signal peptide directing secretion. The disordered stretch occupies residues 293-317 (RPETDYEGANLPNIPSKKGSANQPV).

This is an uncharacterized protein from Acanthamoeba polyphaga mimivirus (APMV).